A 494-amino-acid chain; its full sequence is Glutamyl-tRNA(Gln) amidotransferase subunit A (494 aa).

Residues K80 and S155 each act as charge relay system in the active site. Residue S179 is the Acyl-ester intermediate of the active site.

This sequence belongs to the amidase family. GatA subfamily. In terms of assembly, heterotrimer of A, B and C subunits.

It carries out the reaction L-glutamyl-tRNA(Gln) + L-glutamine + ATP + H2O = L-glutaminyl-tRNA(Gln) + L-glutamate + ADP + phosphate + H(+). Functionally, allows the formation of correctly charged Gln-tRNA(Gln) through the transamidation of misacylated Glu-tRNA(Gln) in organisms which lack glutaminyl-tRNA synthetase. The reaction takes place in the presence of glutamine and ATP through an activated gamma-phospho-Glu-tRNA(Gln). In Lachnoclostridium phytofermentans (strain ATCC 700394 / DSM 18823 / ISDg) (Clostridium phytofermentans), this protein is Glutamyl-tRNA(Gln) amidotransferase subunit A.